The chain runs to 204 residues: CASP-like protein 1B2 (204 aa).

At 1–28 (MASKGEEKPELVGSKQGIVSVTKAKHDQ) the chain is on the cytoplasmic side. A helical membrane pass occupies residues 29-49 (IVLVLRVVAFLATASATIVMG). Over 50-80 (LNQETKTLLVGTIGTTPIRATLKAKFQHTPA) the chain is Extracellular. Residues 81–101 (FVFFVVANGLASVYNLVMLGV) traverse the membrane as a helical segment. The Cytoplasmic segment spans residues 102–114 (DVFGRKLDCKGLR). The helical transmembrane segment at 115-135 (LVIISILDMVIVAVVAAGASS) threads the bilayer. The Extracellular segment spans residues 136–168 (AAFMAELGKNGNSHAKWNKICDKFESFCHQGGG). A helical transmembrane segment spans residues 169–189 (ALIPSFIALLLLFLISAISII). At 190-204 (TLHNQKLTSPHATTP) the chain is on the cytoplasmic side.

The protein belongs to the Casparian strip membrane proteins (CASP) family. As to quaternary structure, homodimer and heterodimers.

It is found in the cell membrane. This Vitis vinifera (Grape) protein is CASP-like protein 1B2.